The primary structure comprises 223 residues: DnaJ homolog subfamily B member 9 (223 aa).

An N-terminal signal peptide occupies residues 1–23 (MATPQSIFIFAICILMITELILA). Positions 26-90 (SYYDILGVPK…NRRKEYDTLG (65 aa)) constitute a J domain. A divergent targeting domain region spans residues 91 to 223 (HSAFTNGKGQ…VTTYTDCSGQ (133 aa)). Residue Ser-133 is modified to Phosphoserine.

Interacts with HSPA5/BiP; interaction is direct. Interacts with ERN1/IRE1 (via the luminal region). Interacts with DERL1.

The protein localises to the endoplasmic reticulum lumen. Its function is as follows. Co-chaperone for Hsp70 protein HSPA5/BiP that acts as a key repressor of the ERN1/IRE1-mediated unfolded protein response (UPR). J domain-containing co-chaperones stimulate the ATPase activity of Hsp70 proteins and are required for efficient substrate recognition by Hsp70 proteins. In the unstressed endoplasmic reticulum, interacts with the luminal region of ERN1/IRE1 and selectively recruits HSPA5/BiP: HSPA5/BiP disrupts the dimerization of the active ERN1/IRE1 luminal region, thereby inactivating ERN1/IRE1. Also involved in endoplasmic reticulum-associated degradation (ERAD) of misfolded proteins. Required for survival of B-cell progenitors and normal antibody production. This chain is DnaJ homolog subfamily B member 9, found in Pongo abelii (Sumatran orangutan).